The chain runs to 73 residues: Acyl carrier protein homolog (73 aa).

In terms of domain architecture, Carrier spans 1–72 (MAIKEWIITQ…DIIVLIEQKS (72 aa)). O-(pantetheine 4'-phosphoryl)serine is present on Ser32.

4'-phosphopantetheine is transferred from CoA to a specific serine of the apo-ACP-like protein.

Its pathway is lipid metabolism; fatty acid biosynthesis. Carrier of the growing fatty acid chain in fatty acid biosynthesis. The protein is Acyl carrier protein homolog of Mycoplasmopsis pulmonis (strain UAB CTIP) (Mycoplasma pulmonis).